Reading from the N-terminus, the 416-residue chain is Tyrosine-protein phosphatase non-receptor type 2 (416 aa).

In terms of domain architecture, Tyrosine-protein phosphatase spans 5–275 (IEREFEELDA…RFSYMAIIEG (271 aa)). Y22 is subject to Phosphotyrosine. Phosphoserine is present on S52. Position 68 is a phosphotyrosine (Y68). Substrate contacts are provided by residues D182, 216 to 222 (CSAGIGR), and Q260. The active-site Phosphocysteine intermediate is the C216. S-nitrosocysteine is present on C216. Phosphoserine is present on residues S293, S298, S304, S320, and S339. An endoplasmic reticulum location region spans residues 341 to 410 (ESILRKRIRE…WTLLFQLNVL (70 aa)). The segment at 371 to 410 (ERKRKRWLYWQPILTKMGFVSVILVGALVGWTLLFQLNVL) is may mediate interaction with STX17.

Belongs to the protein-tyrosine phosphatase family. Non-receptor class 1 subfamily. In terms of assembly, interacts with RMDN3. Interacts with TMED9. Interacts with STX17; dephosphorylates STX17. Interacts with ITGA1 (via cytoplasmic domain); activates the phosphatase activity towards EGFR. Interacts with TRAF2; probably involved in tumor necrosis factor-mediated signaling. Interacts with MET. Interacts with FAM220A and STAT3; interaction with FAM220A promotes interaction of PTPN2 with transcriptional activator STAT3, leading to dephosphorylation of STAT3 by PTPN2 and negative regulation of STAT3 transcriptional activator activity. Post-translationally, specifically phosphorylated in a cell cycle-dependent manner by cyclin-dependent kinases CDK1 and CDK2. Probably activated through phosphorylation by PKR. Does not show tissue- or cell-type specificity although levels of transcription show variability. Macrophages showed higher levels of expression than lymphocytes.

The protein localises to the cytoplasm. The protein resides in the endoplasmic reticulum-Golgi intermediate compartment. It is found in the endoplasmic reticulum. Its subcellular location is the nucleus membrane. It localises to the nucleus. The protein localises to the cell membrane. The catalysed reaction is O-phospho-L-tyrosyl-[protein] + H2O = L-tyrosyl-[protein] + phosphate. In terms of biological role, non-receptor type tyrosine-specific phosphatase that dephosphorylates receptor protein tyrosine kinases including INSR, EGFR, CSF1R, PDGFR. Also dephosphorylates non-receptor protein tyrosine kinases like JAK1, JAK2, JAK3, Src family kinases, STAT1, STAT3 and STAT6 either in the nucleus or the cytoplasm. Negatively regulates numerous signaling pathways and biological processes like hematopoiesis, inflammatory response, cell proliferation and differentiation, and glucose homeostasis. Plays a multifaceted and important role in the development of the immune system. Functions in T-cell receptor signaling through dephosphorylation of FYN and LCK to control T-cells differentiation and activation. Dephosphorylates CSF1R, negatively regulating its downstream signaling and macrophage differentiation. Negatively regulates cytokine (IL2/interleukin-2 and interferon)-mediated signaling through dephosphorylation of the cytoplasmic kinases JAK1, JAK3 and their substrate STAT1, that propagate signaling downstream of the cytokine receptors. Also regulates the IL6/interleukin-6 and IL4/interleukin-4 cytokine signaling through dephosphorylation of STAT3 and STAT6 respectively. In addition to the immune system, it is involved in anchorage-dependent, negative regulation of EGF-stimulated cell growth. Activated by the integrin ITGA1/ITGB1, it dephosphorylates EGFR and negatively regulates EGF signaling. Dephosphorylates PDGFRB and negatively regulates platelet-derived growth factor receptor-beta signaling pathway and therefore cell proliferation. Negatively regulates tumor necrosis factor-mediated signaling downstream via MAPK through SRC dephosphorylation. May also regulate the hepatocyte growth factor receptor signaling pathway through dephosphorylation of the hepatocyte growth factor receptor MET. Also plays an important role in glucose homeostasis. For instance, negatively regulates the insulin receptor signaling pathway through the dephosphorylation of INSR and control gluconeogenesis and liver glucose production through negative regulation of the IL6 signaling pathways. May also bind DNA. The chain is Tyrosine-protein phosphatase non-receptor type 2 (Ptpn2) from Rattus norvegicus (Rat).